The primary structure comprises 111 residues: Large ribosomal subunit protein P2B (111 aa).

Positions Leu-62–Asp-111 are disordered. A compositionally biased stretch (low complexity) spans Ser-67 to Ala-87. Residues Glu-88–Met-105 are compositionally biased toward acidic residues. A Phosphoserine modification is found at Ser-101.

The protein belongs to the eukaryotic ribosomal protein P1/P2 family.

In terms of biological role, plays an important role in the elongation step of protein synthesis. The polypeptide is Large ribosomal subunit protein P2B (RPP2B) (Candida albicans (Yeast)).